A 104-amino-acid chain; its full sequence is Increased recombination centers protein 13 (104 aa).

Residues 63-83 form a helical membrane-spanning segment; that stretch reads LVHLFSYVFFLFLLKICVDVL.

It is found in the membrane. Functionally, may be involved in a pathway contributing to genomic integrity. This chain is Increased recombination centers protein 13 (IRC13), found in Saccharomyces cerevisiae (strain ATCC 204508 / S288c) (Baker's yeast).